The chain runs to 343 residues: NAC domain-containing protein 4 (343 aa).

One can recognise an NAC domain in the interval 12–168 (LPPGFRFHPT…EWVLCRVFKK (157 aa)). The DNA-binding element occupies 109–174 (VGMKKTLVFY…VFKKSLVEVG (66 aa)). Positions 304–333 (GGERERLSASQDTGLTSDVNPEISSSSGQK) are disordered. Over residues 311–332 (SASQDTGLTSDVNPEISSSSGQ) the composition is skewed to polar residues.

In terms of tissue distribution, expressed in roots, tiller buds, stems, leaves, lamina joints and the young husks. Expressed in embryos, coleoptiles, radicles, leaf pulvinus, ligules, panicles, palea and lemma, anthers, and the internode of the peduncles. Expressed in young leaves, root meristems, florescence meristems and young spikelets.

Its subcellular location is the nucleus. Functionally, transcription factor involved in the regulation of tiller bud outgrowth, but does not seem to regulate tiller bud initiation. Possesses transactivation activity in yeast. Involved in the regulation of plant architecture and grain yield. Acts as a negative regulator of plant height and flowering time. Regulates directly key genes of the gibberellin (GA) pathway by binding to their promoters. Positively regulates leaf senescence in an age-dependent manner. Activates directly the expression of the chlorophyll degradation genes SGR and NYC3. Positively regulates the level of abscisic acid (ABA) by directly up-regulating the expression of the ABA biosynthetic genes NCED3 and ZEP, and down-regulating the ABA catabolic gene CYP707A5/ABA8OX1. Promotes salt-induced cell death accompanied by the loss of plasma membrane integrity, nuclear DNA fragmentation, and changes of caspase-like activity. Targets genes that encoded a reactive oxygen species (ROS) scavenger COX11 and a caspase-like protease AP37. Activates the potassium efflux channels GORK and SKOR. Acts as a positive regulator of drought and salt tolerance through ABA-mediated pathways. Acts as a negative regulator of root growth. Functions as an upstream integrator of auxin and cytokinin signals that affect CROWN ROOTLESS (CRL) and cyclin-dependent protein kinase (CDK) genes to regulate cell division during root development. Binds directly to the promoters of the auxin inactivation-related genes GH3.6 and GH3.8, the auxin signaling-related gene ARF25, and the cytokinin oxidase gene CKX4. Activates directly the expressions of the 1-aminocyclopropane-1-carboxylate oxidase genes ACO1 and ACO3, enhancing ethylene synthesis, and then retarding seedling establishment. This Oryza sativa subsp. japonica (Rice) protein is NAC domain-containing protein 4.